The chain runs to 122 residues: Large ribosomal subunit protein uL14 (122 aa).

Belongs to the universal ribosomal protein uL14 family. Part of the 50S ribosomal subunit. Forms a cluster with proteins L3 and L19. In the 70S ribosome, L14 and L19 interact and together make contacts with the 16S rRNA in bridges B5 and B8.

Binds to 23S rRNA. Forms part of two intersubunit bridges in the 70S ribosome. This is Large ribosomal subunit protein uL14 from Xanthomonas oryzae pv. oryzae (strain MAFF 311018).